A 488-amino-acid polypeptide reads, in one-letter code: Glutamyl-tRNA(Gln) amidotransferase subunit A (488 aa).

Catalysis depends on charge relay system residues lysine 77 and serine 152. The active-site Acyl-ester intermediate is the serine 176.

The protein belongs to the amidase family. GatA subfamily. As to quaternary structure, heterotrimer of A, B and C subunits.

The enzyme catalyses L-glutamyl-tRNA(Gln) + L-glutamine + ATP + H2O = L-glutaminyl-tRNA(Gln) + L-glutamate + ADP + phosphate + H(+). In terms of biological role, allows the formation of correctly charged Gln-tRNA(Gln) through the transamidation of misacylated Glu-tRNA(Gln) in organisms which lack glutaminyl-tRNA synthetase. The reaction takes place in the presence of glutamine and ATP through an activated gamma-phospho-Glu-tRNA(Gln). The sequence is that of Glutamyl-tRNA(Gln) amidotransferase subunit A from Streptococcus pyogenes serotype M28 (strain MGAS6180).